A 156-amino-acid polypeptide reads, in one-letter code: Small ribosomal subunit protein uS7 (156 aa).

It belongs to the universal ribosomal protein uS7 family. As to quaternary structure, part of the 30S ribosomal subunit. Contacts proteins S9 and S11.

Its function is as follows. One of the primary rRNA binding proteins, it binds directly to 16S rRNA where it nucleates assembly of the head domain of the 30S subunit. Is located at the subunit interface close to the decoding center, probably blocks exit of the E-site tRNA. This is Small ribosomal subunit protein uS7 from Syntrophomonas wolfei subsp. wolfei (strain DSM 2245B / Goettingen).